A 1916-amino-acid polypeptide reads, in one-letter code: MAHIKLDTLDVVQRPGTTRRSNSNSGRSSACSSGSLSPVPIIPIIAISRDTDDSESESEIETEPARLFQRRMSIKCTNNLAAIIKEGFLLKHTWSFQRWRRRYFRLKRNVLFHAKDFQCDVLDEIDLSDLCYFECGIKNVNHSSQIITPTRSLVLCAESRREMEDWLGSLKTATTPQRPRGDSFLIEQHDILSNHHHWYATSHARPTYCNVCRDALSGVTSHGLSCEVCKCKVHKRCAAKSIANCKWTTLASVGKDIIEQADGSIIMPHQWMEGNLPVSSVCAVCKKTCGSVLRLQDWRCLWCRATVHVACRPQMAVACPIGPAKLSVVPPTSVHSISTDDAWDVASPKGNFSPLLVFVNSKSGDNQGVKFLRRFKQLLNPAQVFDLISTGPSLGLRLFRHFEMFRILVCSGDGSVGWVLSEIDRFNMHKQCQVAVMPLGTGNDLARVLGWGSSCDDDTHLPQILERYESASTKMLDRWSIMVFEKAIAVPKTPKMSITTEQEALLTGMVTSANHHLRFIVETNDTQTLISSTQSLCDTIDDLVGRISEHHREDEQLAVKCDILRQKLNMLLDALQEEEMGAHSGDDLIATIRSLIARSIPQTPGTSAPLLNPSISIEKNEKDEINTKERRSSRSLRSSEKEALQSRANSVKRAIYNVVEHSEPGRPKRYQRKLSITPFEALKLPTTASGDSTPCSSPLPIIPPINIISPTMETSRLTCISPLPDTRRDSVDESFFNSISLPAPRQFADSRRSSGVPDVIQEIEEGANGETVYRIGRMSLSGGANIDDAGNRLSPCSDGGENTPTERKVDFLRVPILTGEPIVDPLSDYRPIEVFERTYYMNRELDRGKEGTEEKKGDIEKEKSSGTDVEKEDNMPTEKQALVHICNLQVPGIVVTPNSQNVYTSASLTIIDTDAQTTNEQSSSEEIAGEASDVLSAISNEECSVASEIFDKQDAGHTLGDIIQSLDASNFTHIDSPETSDETEAMPGESIMDDISSVLGHDITYALQDNTLTDDTTTLCSEHVGPPKPPRKKSLSALTRGHSHPRRRNSSPPRIPRLARMDSDDNPQQFGFENIVFEIDNRCDDQKMREPPRYCSLAQFVEGNDIARQSFKQLMLEQHGSNDNDTEYPEQQTPTNTMTNLMATTSEDELSTQTAIKIEIQDVDATMVRNINSSMKANTILTTSTSPTKKSGHGQDISVVVRPPTPLRGDSVKPSGSLLLDGSGGAISMAMGCSSLLGVRAMNAEIRRHSSHAPGLAVREIDKDKDRRHSGFNPNLLTLDPEHARFLSSSPAASRRISCGSLFKKNQKIATKRGYGLFSVRFLVVAEPDIRLATLALIRPLIPLPNEALPNLQTLKGSKSSLFMGSTLFGFDQFAAGDKEKDEKGCKDKEKTPTEETGRKLPIINPLVRLPNWPNLANGGGFISKCLLANADTLCAAVSPLMDPDETLLAGYHEKCVMNNYFGIGIDAKISLDFHNKREEHPEKCRSRARNYMWYGVLGSKQLLQKTCKNLEQRVQLECDGQRIPLPELQGIVILNIPSFMGGTNFWGSSTKKDDIFLPPSFDDRVLEVVAVFGSVQMAASRLINLQHHRIAQCQSVQINILGDEEIPIQVDGEAWLQPPGMIRILHKNRVQMLCRNRSLELSLKSWQEKQRQHSISIQRDTSSTTSEHATSTDEVISERECYVLLNFIEAVSSLVKWVKFLIISHPALQHDLYAVACRASEALESIHPQGKLLEGPSLRTKLVEVIDSSRQLYDDACTLLRDRGHSLILREDLETKLSAALANMEMELKKCSVQKCIDGKLRAYFNVLAPNEEPDARRKSRPFWVRLRSGSTAGQQAFKPPLTNTREAANNWSVNEVVTWLETMQLSEYVDSFLKNDIRGKELITLGRRDLKDLGVVKVGHVKRILQAIKDLSEN.

The segment at 1 to 36 (MAHIKLDTLDVVQRPGTTRRSNSNSGRSSACSSGSL) is disordered. Residues 19–36 (RRSNSNSGRSSACSSGSL) are compositionally biased toward low complexity. The PH domain maps to 82–175 (AIIKEGFLLK…WLGSLKTATT (94 aa)). Phorbol-ester/DAG-type zinc fingers lie at residues 195 to 245 (HHHW…IANC) and 268 to 319 (PHQW…AVAC). Positions 350-486 (GNFSPLLVFV…DRWSIMVFEK (137 aa)) constitute a DAGKc domain. A compositionally biased stretch (basic and acidic residues) spans 623-644 (DEINTKERRSSRSLRSSEKEAL). 4 disordered regions span residues 623-648 (DEIN…QSRA), 846-874 (DRGK…KEDN), 1018-1067 (TLCS…DDNP), and 1183-1214 (TSTS…SVKP). One can recognise an SAM domain in the interval 1853-1916 (WSVNEVVTWL…LQAIKDLSEN (64 aa)).

Belongs to the eukaryotic diacylglycerol kinase family.

The protein resides in the cytoplasm. The catalysed reaction is a 1,2-diacyl-sn-glycerol + ATP = a 1,2-diacyl-sn-glycero-3-phosphate + ADP + H(+). In terms of biological role, phosphorylates diacylglycerol (DAG) to generate phosphatidic acid (PA). The sequence is that of Diacylglycerol kinase eta from Drosophila ananassae (Fruit fly).